The sequence spans 475 residues: MSPQTETKASVGFKAGVKDYKLTYHTPDYETKDTDILAAFRVTPQPGVPPEEAGAAVAAESSTGTWTTVWTDGLTSLDRYKGRCYHIEPVAGEESQFIAYVAYPLDLFEEGSVTNMFTSIVGNVFGFKALRALRLEDLRIPPAYSKTFQGPPHGIQVERDKLNKYGRPLLGCTIKPKLGLSAKNYGRAVYECLRGGLDFTKDDENVNSQPFMRWRDRFLFCAEAIYKAQAETGEIKGHYLNATAGTCEEMMKRAIFARELGVPIVMHDYLTGGFTANTSLAHYCRDNGLLLHIHRAMHAVIDRQKNHGIHFRVLAKALRMSGGDHIHAGTVVGKLEGEREITLGFVDLLRDDYIEKDRSRGIYFTQDWVSLPGVLPVASGGIHVWHMPALTEIFGDDSVLQFGGGTLGHPWGNAPGAVANRVALEACVQARNEGRDLAREGNEIIREAAKWSPELAAACEVWKEIKFEFPAMDTL.

Positions methionine 1–serine 2 are excised as a propeptide. Proline 3 is subject to N-acetylproline. N6,N6,N6-trimethyllysine is present on lysine 14. Residues asparagine 123 and threonine 173 each contribute to the substrate site. Lysine 175 (proton acceptor) is an active-site residue. Substrate is bound at residue lysine 177. Mg(2+) contacts are provided by lysine 201, aspartate 203, and glutamate 204. Lysine 201 bears the N6-carboxylysine mark. The Proton acceptor role is filled by histidine 294. The substrate site is built by arginine 295, histidine 327, and serine 379.

This sequence belongs to the RuBisCO large chain family. Type I subfamily. As to quaternary structure, heterohexadecamer of 8 large chains and 8 small chains; disulfide-linked. The disulfide link is formed within the large subunit homodimers. The cofactor is Mg(2+). In terms of processing, the disulfide bond which can form in the large chain dimeric partners within the hexadecamer appears to be associated with oxidative stress and protein turnover.

The protein localises to the plastid. It localises to the chloroplast. The catalysed reaction is 2 (2R)-3-phosphoglycerate + 2 H(+) = D-ribulose 1,5-bisphosphate + CO2 + H2O. It catalyses the reaction D-ribulose 1,5-bisphosphate + O2 = 2-phosphoglycolate + (2R)-3-phosphoglycerate + 2 H(+). Its function is as follows. RuBisCO catalyzes two reactions: the carboxylation of D-ribulose 1,5-bisphosphate, the primary event in carbon dioxide fixation, as well as the oxidative fragmentation of the pentose substrate in the photorespiration process. Both reactions occur simultaneously and in competition at the same active site. The protein is Ribulose bisphosphate carboxylase large chain of Betula papyrifera (Paper birch).